Here is a 246-residue protein sequence, read N- to C-terminus: tRNA (guanine-N(7)-)-methyltransferase (246 aa).

Residues Glu77, Glu102, Asp129, and Asp152 each coordinate S-adenosyl-L-methionine. The active site involves Asp152. Substrate is bound by residues Lys156, Asp188, and 225-228 (TKFE).

It belongs to the class I-like SAM-binding methyltransferase superfamily. TrmB family.

It catalyses the reaction guanosine(46) in tRNA + S-adenosyl-L-methionine = N(7)-methylguanosine(46) in tRNA + S-adenosyl-L-homocysteine. It functions in the pathway tRNA modification; N(7)-methylguanine-tRNA biosynthesis. Its function is as follows. Catalyzes the formation of N(7)-methylguanine at position 46 (m7G46) in tRNA. The chain is tRNA (guanine-N(7)-)-methyltransferase from Haemophilus influenzae (strain PittEE).